A 418-amino-acid chain; its full sequence is Tyrosine--tRNA ligase (418 aa).

Tyr38 serves as a coordination point for L-tyrosine. A 'HIGH' region motif is present at residues 43 to 52; that stretch reads CTARSLHIGS. Positions 175 and 179 each coordinate L-tyrosine. Residues 235-239 carry the 'KMSKS' region motif; it reads KMGKT. Lys238 lines the ATP pocket. Residues 348–413 form the S4 RNA-binding domain; that stretch reads LSVVKLLQVS…CGKKRHLKVV (66 aa).

This sequence belongs to the class-I aminoacyl-tRNA synthetase family. TyrS type 1 subfamily. In terms of assembly, homodimer.

It is found in the cytoplasm. It catalyses the reaction tRNA(Tyr) + L-tyrosine + ATP = L-tyrosyl-tRNA(Tyr) + AMP + diphosphate + H(+). In terms of biological role, catalyzes the attachment of tyrosine to tRNA(Tyr) in a two-step reaction: tyrosine is first activated by ATP to form Tyr-AMP and then transferred to the acceptor end of tRNA(Tyr). The protein is Tyrosine--tRNA ligase of Ehrlichia ruminantium (strain Gardel).